Consider the following 209-residue polypeptide: Large ribosomal subunit protein bL9 (209 aa).

Residues 184-209 (SAASEDSDLVETPEDRATEEAEDEQP) are disordered.

Belongs to the bacterial ribosomal protein bL9 family.

Its function is as follows. Binds to the 23S rRNA. The chain is Large ribosomal subunit protein bL9 from Dinoroseobacter shibae (strain DSM 16493 / NCIMB 14021 / DFL 12).